A 92-amino-acid polypeptide reads, in one-letter code: Putative pterin-4-alpha-carbinolamine dehydratase (92 aa).

This sequence belongs to the pterin-4-alpha-carbinolamine dehydratase family.

The catalysed reaction is (4aS,6R)-4a-hydroxy-L-erythro-5,6,7,8-tetrahydrobiopterin = (6R)-L-erythro-6,7-dihydrobiopterin + H2O. The sequence is that of Putative pterin-4-alpha-carbinolamine dehydratase from Natronomonas pharaonis (strain ATCC 35678 / DSM 2160 / CIP 103997 / JCM 8858 / NBRC 14720 / NCIMB 2260 / Gabara) (Halobacterium pharaonis).